The sequence spans 294 residues: G-protein coupled receptor homolog U51 (294 aa).

Residues 1-14 (MKNIDLTNWKLLAE) are Extracellular-facing. Residues 15–35 (IYEYLFFFSFFFLCLLVIIVV) traverse the membrane as a helical segment. The Cytoplasmic segment spans residues 36–47 (KFNNSTVGREYT). Residues 48-68 (FSTFSGMLVYILLLPVKMGML) form a helical membrane-spanning segment. At 69–79 (TKMWDVSTDYC) the chain is on the extracellular side. A helical membrane pass occupies residues 80–102 (IILMFLSDFSFIFSSWALTLLAL). The Cytoplasmic segment spans residues 103–119 (ERINNFSFSEIKVNETK). Residues 120 to 140 (ILKQMSFPIIWVTSIFQAVQI) form a helical membrane-spanning segment. Over 141–166 (SMKYKKSQMNLEDDYCLLAIERSAEE) the chain is Extracellular. The chain crosses the membrane as a helical span at residues 167-187 (AWILLMYTVVIPTFIVFFYVL). At 188–200 (NKRFLFLERDLNS) the chain is on the cytoplasmic side. A helical membrane pass occupies residues 201 to 221 (IVTHLSLFLFFGALCFFPASV). At 222–236 (LNEFNCNRLFYGLHE) the chain is on the extracellular side. A helical membrane pass occupies residues 237–257 (LLIVCLELKIFYVPTMTYIIS). The Cytoplasmic segment spans residues 258 to 294 (CENYRLAAKAFFCKCFKPCFLMPSLRKLQQPTKSTQF).

This sequence belongs to the G-protein coupled receptor 1 family.

It localises to the host cell membrane. The sequence is that of G-protein coupled receptor homolog U51 (U51) from Human herpesvirus 7 (strain JI) (HHV-7).